Reading from the N-terminus, the 117-residue chain is Immunoglobulin heavy variable 1-45 (117 aa).

Residues methionine 1–serine 19 form the signal peptide. Residues glutamine 20–serine 44 are framework-1. The Ig-like domain occupies glutamine 20 to arginine 117. Cysteine 41 and cysteine 115 are joined by a disulfide. Residues glycine 45–tyrosine 52 are complementarity-determining-1. Positions leucine 53–tryptophan 69 are framework-2. The complementarity-determining-2 stretch occupies residues isoleucine 70–threonine 77. The tract at residues asparagine 78 to cysteine 115 is framework-3. A complementarity-determining-3 region spans residues alanine 116–arginine 117.

Immunoglobulins are composed of two identical heavy chains and two identical light chains; disulfide-linked.

It is found in the secreted. The protein resides in the cell membrane. V region of the variable domain of immunoglobulin heavy chains that participates in the antigen recognition. Immunoglobulins, also known as antibodies, are membrane-bound or secreted glycoproteins produced by B lymphocytes. In the recognition phase of humoral immunity, the membrane-bound immunoglobulins serve as receptors which, upon binding of a specific antigen, trigger the clonal expansion and differentiation of B lymphocytes into immunoglobulins-secreting plasma cells. Secreted immunoglobulins mediate the effector phase of humoral immunity, which results in the elimination of bound antigens. The antigen binding site is formed by the variable domain of one heavy chain, together with that of its associated light chain. Thus, each immunoglobulin has two antigen binding sites with remarkable affinity for a particular antigen. The variable domains are assembled by a process called V-(D)-J rearrangement and can then be subjected to somatic hypermutations which, after exposure to antigen and selection, allow affinity maturation for a particular antigen. The polypeptide is Immunoglobulin heavy variable 1-45 (Homo sapiens (Human)).